The primary structure comprises 210 residues: HTH-type transcriptional repressor ComR (210 aa).

In terms of domain architecture, HTH tetR-type spans 18 to 78 (VFDRDAALDK…AVLDRYIDRF (61 aa)). A DNA-binding region (H-T-H motif) is located at residues 41–60 (SLADLVEATGAKAPTLYAEF).

Its activity is regulated as follows. Binding to the promoter region of BhsA/ComC is released in the presence of copper. In terms of biological role, represses expression of BhsA/ComC by binding to its promoter region in the absence of copper. In Escherichia coli (strain K12), this protein is HTH-type transcriptional repressor ComR (comR).